The chain runs to 236 residues: 28 kDa antigen (236 aa).

An N-terminal signal peptide occupies residues 1 to 22 (MPNRRRCKLSTAISTVATLAIA). The segment at 76-105 (PVPSLTGTDDPGNGLRTPGLTSPDLTNQEL) is disordered. Residues 94-105 (GLTSPDLTNQEL) show a composition bias toward polar residues.

This sequence to M.tuberculosis ERP.

This chain is 28 kDa antigen, found in Mycobacterium leprae (strain TN).